The chain runs to 475 residues: Sulfate adenylyltransferase subunit 1 (475 aa).

The region spanning Lys25–Arg239 is the tr-type G domain. The G1 stretch occupies residues Gly34 to Ser41. Gly34–Ser41 is a GTP binding site. Positions Gly92–Asp96 are G2. The tract at residues Asp113 to Gly116 is G3. GTP-binding positions include Asp113–His117 and Asn168–Asp171. The interval Asn168–Asp171 is G4. The segment at Ser206–Leu208 is G5.

It belongs to the TRAFAC class translation factor GTPase superfamily. Classic translation factor GTPase family. CysN/NodQ subfamily. As to quaternary structure, heterodimer composed of CysD, the smaller subunit, and CysN.

It carries out the reaction sulfate + ATP + H(+) = adenosine 5'-phosphosulfate + diphosphate. It functions in the pathway sulfur metabolism; hydrogen sulfide biosynthesis; sulfite from sulfate: step 1/3. In terms of biological role, with CysD forms the ATP sulfurylase (ATPS) that catalyzes the adenylation of sulfate producing adenosine 5'-phosphosulfate (APS) and diphosphate, the first enzymatic step in sulfur assimilation pathway. APS synthesis involves the formation of a high-energy phosphoric-sulfuric acid anhydride bond driven by GTP hydrolysis by CysN coupled to ATP hydrolysis by CysD. The protein is Sulfate adenylyltransferase subunit 1 of Escherichia coli O127:H6 (strain E2348/69 / EPEC).